The sequence spans 361 residues: Putative agmatine deiminase (361 aa).

Cys-354 functions as the Amidino-cysteine intermediate in the catalytic mechanism.

Belongs to the agmatine deiminase family.

The catalysed reaction is agmatine + H2O = N-carbamoylputrescine + NH4(+). The protein is Putative agmatine deiminase of Streptococcus pneumoniae (strain 70585).